The sequence spans 557 residues: 2-isopropylmalate synthase (557 aa).

A Pyruvate carboxyltransferase domain is found at Pro-33 to Asp-307. Residues Asp-42, His-246, His-248, and Asn-282 each coordinate Mg(2+). The regulatory domain stretch occupies residues Ala-439 to Ala-557.

The protein belongs to the alpha-IPM synthase/homocitrate synthase family. LeuA type 2 subfamily. In terms of assembly, homodimer. Mg(2+) serves as cofactor.

The protein resides in the cytoplasm. It carries out the reaction 3-methyl-2-oxobutanoate + acetyl-CoA + H2O = (2S)-2-isopropylmalate + CoA + H(+). It participates in amino-acid biosynthesis; L-leucine biosynthesis; L-leucine from 3-methyl-2-oxobutanoate: step 1/4. In terms of biological role, catalyzes the condensation of the acetyl group of acetyl-CoA with 3-methyl-2-oxobutanoate (2-ketoisovalerate) to form 3-carboxy-3-hydroxy-4-methylpentanoate (2-isopropylmalate). This Pseudomonas entomophila (strain L48) protein is 2-isopropylmalate synthase.